A 447-amino-acid polypeptide reads, in one-letter code: MIKIKKGLDLPIAGAPVQTIQDGPAIHHVALLGEEYVGMRPSMLVQEGDQVKKGQALFEDKKNPGVLFTAPASGKISAINRGERRVLQSVVIEVEGDEQIPFEHYAAEELNQLSDEQVQHHLLTSGLWTALRTRPFSKTPVPGSRPRAIFISAMDTQPLAADPQVIIATESEAFNHGLTVLTRLTDGKVHVCHAAGQAVTRHTNTQVTYNEFSGPHPAGLVGTHIHFLEPVSQTKMVWHVGYQDVIAIGKLFTRGELCTDRIVALAGPQVNQPILLRTRLGASLSELTAGKLKEGDNRIISGSVLSGTAFSATHGYLGRFHQQVSVIREGREKELFGWVMPGRDKYSITRTTLGHFFKRKLFAFSTDMHGGERAMVPIGNYERVMPLDILATHLLRDLLAGDTDSAQALGCLELDEEDLALCTFVCPGKYEYGPVLRDILTQIEQEG.

It belongs to the NqrA family. In terms of assembly, composed of six subunits; NqrA, NqrB, NqrC, NqrD, NqrE and NqrF.

The catalysed reaction is a ubiquinone + n Na(+)(in) + NADH + H(+) = a ubiquinol + n Na(+)(out) + NAD(+). Functionally, NQR complex catalyzes the reduction of ubiquinone-1 to ubiquinol by two successive reactions, coupled with the transport of Na(+) ions from the cytoplasm to the periplasm. NqrA to NqrE are probably involved in the second step, the conversion of ubisemiquinone to ubiquinol. In Yersinia pestis, this protein is Na(+)-translocating NADH-quinone reductase subunit A.